Here is a 302-residue protein sequence, read N- to C-terminus: Acetylglutamate kinase (302 aa).

Substrate is bound by residues 67–68 (GG), R89, and N194.

The protein belongs to the acetylglutamate kinase family. ArgB subfamily.

It localises to the cytoplasm. The catalysed reaction is N-acetyl-L-glutamate + ATP = N-acetyl-L-glutamyl 5-phosphate + ADP. It functions in the pathway amino-acid biosynthesis; L-arginine biosynthesis; N(2)-acetyl-L-ornithine from L-glutamate: step 2/4. Functionally, catalyzes the ATP-dependent phosphorylation of N-acetyl-L-glutamate. The sequence is that of Acetylglutamate kinase from Hahella chejuensis (strain KCTC 2396).